We begin with the raw amino-acid sequence, 652 residues long: Acetyl-coenzyme A synthetase (652 aa).

Residues 191-194, threonine 311, and asparagine 335 each bind CoA; that span reads RAGR. Residues 387–389, 411–416, aspartate 500, and arginine 515 each bind ATP; these read GEP and DTWWQT. Serine 523 lines the CoA pocket. Arginine 526 contributes to the ATP binding site. Positions 537, 539, and 542 each coordinate Mg(2+). Residue arginine 584 participates in CoA binding. At lysine 609 the chain carries N6-acetyllysine; by autocatalysis.

Belongs to the ATP-dependent AMP-binding enzyme family. As to quaternary structure, forms a 1:1 complex with CobB/NAD-dependent deacetylase. Mg(2+) serves as cofactor. In terms of processing, autoacetylated. Deacetylation by CobB activates the enzyme.

The catalysed reaction is acetate + ATP + CoA = acetyl-CoA + AMP + diphosphate. In terms of biological role, catalyzes the conversion of acetate into acetyl-CoA (AcCoA), an essential intermediate at the junction of anabolic and catabolic pathways. Acs undergoes a two-step reaction. In the first half reaction, Acs combines acetate with ATP to form acetyl-adenylate (AcAMP) intermediate. In the second half reaction, it can then transfer the acetyl group from AcAMP to the sulfhydryl group of CoA, forming the product AcCoA. Functionally, enables the cell to use acetate during aerobic growth to generate energy via the TCA cycle, and biosynthetic compounds via the glyoxylate shunt. Acetylates CheY, the response regulator involved in flagellar movement and chemotaxis. The protein is Acetyl-coenzyme A synthetase of Escherichia coli (strain K12).